The chain runs to 248 residues: 3-deoxy-manno-octulosonate cytidylyltransferase (248 aa).

The protein belongs to the KdsB family.

The protein localises to the cytoplasm. It catalyses the reaction 3-deoxy-alpha-D-manno-oct-2-ulosonate + CTP = CMP-3-deoxy-beta-D-manno-octulosonate + diphosphate. The protein operates within nucleotide-sugar biosynthesis; CMP-3-deoxy-D-manno-octulosonate biosynthesis; CMP-3-deoxy-D-manno-octulosonate from 3-deoxy-D-manno-octulosonate and CTP: step 1/1. Its pathway is bacterial outer membrane biogenesis; lipopolysaccharide biosynthesis. Its function is as follows. Activates KDO (a required 8-carbon sugar) for incorporation into bacterial lipopolysaccharide in Gram-negative bacteria. This Salmonella agona (strain SL483) protein is 3-deoxy-manno-octulosonate cytidylyltransferase.